The primary structure comprises 370 residues: Cobalt-precorrin-5B C(1)-methyltransferase (370 aa).

The protein belongs to the CbiD family.

It carries out the reaction Co-precorrin-5B + S-adenosyl-L-methionine = Co-precorrin-6A + S-adenosyl-L-homocysteine. It participates in cofactor biosynthesis; adenosylcobalamin biosynthesis; cob(II)yrinate a,c-diamide from sirohydrochlorin (anaerobic route): step 6/10. Catalyzes the methylation of C-1 in cobalt-precorrin-5B to form cobalt-precorrin-6A. In Nostoc sp. (strain PCC 7120 / SAG 25.82 / UTEX 2576), this protein is Cobalt-precorrin-5B C(1)-methyltransferase.